A 665-amino-acid polypeptide reads, in one-letter code: Intraflagellar transport protein 70B (665 aa).

TPR repeat units follow at residues Asp-11–Ser-44, Arg-45–Leu-78, Thr-154–Gln-187, Asp-189–Gln-221, Leu-393–Ile-424, Pro-425–His-457, and Val-459–Asn-492. The disordered stretch occupies residues Pro-130 to Thr-154. Positions Tyr-508–Asp-535 form a coiled coil. The stretch at Cys-544 to Lys-577 is one TPR 8 repeat.

It belongs to the TTC30/dfy-1/fleer family. As to quaternary structure, interacts with the IFT B complex components IFT27, IFT46, IFT74, IFT52, IFT57, IFT80, IFT81 and IFT88. Interacts with KIF17.

It localises to the cell projection. The protein resides in the cilium. Required for polyglutamylation of axonemal tubulin. Plays a role in anterograde intraflagellar transport (IFT), the process by which cilia precursors are transported from the base of the cilium to the site of their incorporation at the tip. The chain is Intraflagellar transport protein 70B from Homo sapiens (Human).